The chain runs to 250 residues: Probable transcriptional regulatory protein SAV_6832 (250 aa).

The protein belongs to the TACO1 family.

It localises to the cytoplasm. In Streptomyces avermitilis (strain ATCC 31267 / DSM 46492 / JCM 5070 / NBRC 14893 / NCIMB 12804 / NRRL 8165 / MA-4680), this protein is Probable transcriptional regulatory protein SAV_6832.